We begin with the raw amino-acid sequence, 507 residues long: ATP synthase subunit alpha, chloroplastic (507 aa).

170-177 (GDRQTGKT) provides a ligand contact to ATP. Residue threonine 257 is modified to Phosphothreonine.

This sequence belongs to the ATPase alpha/beta chains family. F-type ATPases have 2 components, CF(1) - the catalytic core - and CF(0) - the membrane proton channel. CF(1) has five subunits: alpha(3), beta(3), gamma(1), delta(1), epsilon(1). CF(0) has four main subunits: a, b, b' and c.

Its subcellular location is the plastid. The protein resides in the chloroplast thylakoid membrane. The enzyme catalyses ATP + H2O + 4 H(+)(in) = ADP + phosphate + 5 H(+)(out). Its function is as follows. Produces ATP from ADP in the presence of a proton gradient across the membrane. The alpha chain is a regulatory subunit. In Crucihimalaya wallichii (Rock-cress), this protein is ATP synthase subunit alpha, chloroplastic.